Reading from the N-terminus, the 693-residue chain is Translation factor GUF1 homolog, mitochondrial (693 aa).

Over residues 51–63 (SSSSTEKPTTSGT) the composition is skewed to polar residues. A disordered region spans residues 51 to 78 (SSSSTEKPTTSGTINGGGGKQKAASQPK). The tr-type G domain maps to 88–270 (QKIRNFSIIA…RIVQMVPPPP (183 aa)). Residues 97–104 (AHIDHGKS), 163–167 (DTPGH), and 217–220 (NKID) each bind GTP.

This sequence belongs to the TRAFAC class translation factor GTPase superfamily. Classic translation factor GTPase family. LepA subfamily.

The protein localises to the mitochondrion inner membrane. It carries out the reaction GTP + H2O = GDP + phosphate + H(+). Functionally, promotes mitochondrial protein synthesis. May act as a fidelity factor of the translation reaction, by catalyzing a one-codon backward translocation of tRNAs on improperly translocated ribosomes. Binds to mitochondrial ribosomes in a GTP-dependent manner. In Phaeodactylum tricornutum (strain CCAP 1055/1), this protein is Translation factor GUF1 homolog, mitochondrial.